The following is a 418-amino-acid chain: Gamma-glutamyl phosphate reductase (418 aa).

This sequence belongs to the gamma-glutamyl phosphate reductase family.

It localises to the cytoplasm. The catalysed reaction is L-glutamate 5-semialdehyde + phosphate + NADP(+) = L-glutamyl 5-phosphate + NADPH + H(+). The protein operates within amino-acid biosynthesis; L-proline biosynthesis; L-glutamate 5-semialdehyde from L-glutamate: step 2/2. Catalyzes the NADPH-dependent reduction of L-glutamate 5-phosphate into L-glutamate 5-semialdehyde and phosphate. The product spontaneously undergoes cyclization to form 1-pyrroline-5-carboxylate. This is Gamma-glutamyl phosphate reductase from Photobacterium profundum (strain SS9).